The sequence spans 56 residues: Metallothionein (56 aa).

Residues C9, C11, C14, C16, C32, C36, H40, C47, H49, C52, and C54 each contribute to the Zn(2+) site.

This sequence belongs to the metallothionein superfamily. Type 14 family.

May play a role in essential metal ion homeostasis (especially zinc homeostasis) and resistance to certain non-essential metal ions. Binds four zinc ions. The polypeptide is Metallothionein (smtA) (Synechococcus elongatus (strain ATCC 33912 / PCC 7942 / FACHB-805) (Anacystis nidulans R2)).